A 209-amino-acid chain; its full sequence is High frequency lysogenization protein HflD homolog (209 aa).

It belongs to the HflD family.

Its subcellular location is the cytoplasm. The protein localises to the cell inner membrane. This is High frequency lysogenization protein HflD homolog from Proteus mirabilis (strain HI4320).